We begin with the raw amino-acid sequence, 1889 residues long: E3 ubiquitin-protein ligase UBR3 (1889 aa).

The tract at residues 1 to 27 is disordered; the sequence is MAAAAAAAAVGDPQPPQPEAPAQGLAL. The UBR-type zinc finger occupies 118–189; sequence ALCGLVWTAN…ESGFCRRHQI (72 aa). The interval 338–362 is disordered; it reads LGQIDSSDEEDQDGSQGLGKRKRVK. Residues Ser-343 and Ser-344 each carry the phosphoserine modification. Helical transmembrane passes span 761-781 and 919-939; these read MLEG…HLGM and LLHC…ILMD. Residues 1167-1199 are a coiled coil; sequence KKITAAEKKTLDKEERRQKARERQQKLLAEFAS. Ser-1199 is modified (phosphoserine). An RING-type; degenerate zinc finger spans residues 1306–1364; that stretch reads DSSCLLAVSIGWEGGVYVQTCGHTLHIDCHKSYMESLRNDQVLQGFSVDKGEFTCPLCR. A helical transmembrane segment spans residues 1807–1827; that stretch reads QNCGAGTGIFLLINASVIIII.

It belongs to the E3 ubiquitin-protein ligase UBR1-like family. In terms of assembly, interacts with UBE2A and UBE2B. In terms of tissue distribution, expressed in numerous cells of the smell, touch, vision, hearing and taste senses. Expressed in cells of the olfactory pathway, including the olfactory cell layer of the main olfactory epithelium (MOE), a mitral neuron cell layer of the olfactory bulb (OB), and a pyramidal cell layer of the piriform cortex of the olfactory cortex (OC). Expressed in the vomeronasal sensory epithelium of the vomeronasal organ (VNO) and the mitral cells of the accessory olfactory bulb. Expressed in tactile tissues, including the dorsal root ganglion, trigeminal ganglion and follicle-sinus complexes. Expressed in cells between hair follicle and sinus and also in the region of the rete ridge collar. Expressed in taste buds of the fungiform, circumvallate, and foliate papillae. Expressed in the spiral ganglion, the organ of Corti of the cochlea in the inner ear, in the sensory epithelium of macula and vestibular ganglion of the balancing system (at protein level). Expressed in the liver and skeletal muscle.

Its subcellular location is the membrane. It carries out the reaction S-ubiquitinyl-[E2 ubiquitin-conjugating enzyme]-L-cysteine + [acceptor protein]-L-lysine = [E2 ubiquitin-conjugating enzyme]-L-cysteine + N(6)-ubiquitinyl-[acceptor protein]-L-lysine.. It functions in the pathway protein modification; protein ubiquitination. In terms of biological role, E3 ubiquitin-protein ligase which is a component of the N-end rule pathway. Does not bind to proteins bearing specific N-terminal residues that are destabilizing according to the N-end rule, leading to their ubiquitination and subsequent degradation. May play a role in Shh signaling by mediating the ubiquitination of Kif7. May be important for MYH9 function in certain tissues, possibly by regulating the ubiquitination of MYH9 and consequently affecting its interaction with MYO7A. The sequence is that of E3 ubiquitin-protein ligase UBR3 (Ubr3) from Mus musculus (Mouse).